Consider the following 348-residue polypeptide: Histidinol-phosphate aminotransferase (348 aa).

Lysine 211 is subject to N6-(pyridoxal phosphate)lysine.

This sequence belongs to the class-II pyridoxal-phosphate-dependent aminotransferase family. Histidinol-phosphate aminotransferase subfamily. In terms of assembly, homodimer. Requires pyridoxal 5'-phosphate as cofactor.

It carries out the reaction L-histidinol phosphate + 2-oxoglutarate = 3-(imidazol-4-yl)-2-oxopropyl phosphate + L-glutamate. Its pathway is amino-acid biosynthesis; L-histidine biosynthesis; L-histidine from 5-phospho-alpha-D-ribose 1-diphosphate: step 7/9. This is Histidinol-phosphate aminotransferase from Pseudomonas entomophila (strain L48).